The chain runs to 471 residues: Rho GTPase-activating protein 15 (471 aa).

The tract at residues 1–20 (MQKSTNSDIPVETLNPTRQG) is disordered. Ser43 carries the phosphoserine modification. In terms of domain architecture, PH spans 79–189 (MVEKEGYLQK…WFHAIKNAID (111 aa)). 3 positions are modified to phosphoserine: Ser196, Ser199, and Ser243. A Rho-GAP domain is found at 281-470 (SHLHTLCERE…LMLSAYDQIF (190 aa)).

The protein localises to the cytoplasm. It is found in the membrane. In terms of biological role, GTPase activator for the Rho-type GTPases by converting them to an inactive GDP-bound state. Has activity toward RAC1. Overexpression results in an increase in actin stress fibers and cell contraction. The protein is Rho GTPase-activating protein 15 (ARHGAP15) of Bos taurus (Bovine).